The primary structure comprises 3412 residues: Genome polyprotein (3412 aa).

Residues 1–104 (MSGRKAQGKT…LSSRKRRSNE (104 aa)) lie on the Cytoplasmic side of the membrane. The interval 38 to 72 (PGPSRGVQGFIFFFLFNILTGKKLTTHLKRLWRML) is hydrophobic; homodimerization of capsid protein C. Positions 102–121 (SNEMAMMPLLILSMVILAGG) are cleaved as a propeptide — ER anchor for the capsid protein C, removed in mature form by serine protease NS3. Residues 105 to 125 (MAMMPLLILSMVILAGGVTLV) form a helical membrane-spanning segment. The Extracellular portion of the chain corresponds to 126–244 (RKNRWLLLNV…GERQLQKIER (119 aa)). Residues Asn-134 and Asn-150 are each glycosylated (N-linked (GlcNAc...) asparagine; by host). Residues 245–265 (WLVRNPFFAITALAIAYLVGN) traverse the membrane as a helical segment. The Cytoplasmic segment spans residues 266–270 (NMTQR). The chain crosses the membrane as a helical span at residues 271–285 (VVIALLVLAVGPAYS). Residues 286 to 730 (AHCIGITDRD…TVFGSAFQGL (445 aa)) are Extracellular-facing. 8 disulfide bridges follow: Cys-288–Cys-315, Cys-345–Cys-401, Cys-345–Cys-406, Cys-359–Cys-390, Cys-377–Cys-401, Cys-377–Cys-406, Cys-467–Cys-568, and Cys-585–Cys-615. Residues 383–396 (DRGWGNGCGLFGKG) are fusion peptide. A helical transmembrane segment spans residues 731–751 (FGGLSWITKVIMGAVLIWVGI). The Extracellular portion of the chain corresponds to 752–757 (NTRNMT). Residues 758–778 (MSMSMILVGVIMMFLSLGVGA) form a helical membrane-spanning segment. Topologically, residues 779–1132 (DQGCAVNFGK…LVRSWVTAGE (354 aa)) are extracellular. Disulfide bonds link Cys-782/Cys-793, Cys-833/Cys-921, Cys-957/Cys-1002, Cys-1058/Cys-1107, Cys-1069/Cys-1091, and Cys-1090/Cys-1094. 2 N-linked (GlcNAc...) asparagine; by host glycosylation sites follow: Asn-908 and Asn-986. The chain crosses the membrane as a helical span at residues 1133–1153 (VHAVPFGLVSMMIAMEVVLRK). The Cytoplasmic portion of the chain corresponds to 1154 to 1201 (RQGPKQMLVGGIILLGAMLVGQVTVLDLVKLIVAVGLHFHEINNGGDA). A helical transmembrane segment spans residues 1202-1222 (MYMALIASFSIRPGLLVGFGL). Over 1223 to 1287 (RTLWSPRERL…VLPLMALLTP (65 aa)) the chain is Lumenal. The chain crosses the membrane as a helical span at residues 1288–1308 (VTMHEVRMATMLFCTVVIVGV). At 1309-1355 (LHQNAKDTSMQKTIPIVALTLTSYMGLTQPFLGLCAYMSTQVFGRRS) the chain is on the cytoplasmic side. Residues 1356–1376 (IPVNEALAAAGLVGVLAGLAF) traverse the membrane as a helical segment. Residues 1377–1378 (QD) lie on the Lumenal side of the membrane. The chain crosses the membrane as a helical span at residues 1379 to 1399 (MENFLGPIAVGGILMMLVSVA). Topologically, residues 1400–1456 (GKVDGLELKKLGEVSWEEEAEISGSSSRYDVALSEQGEFKLLSEDKVPWDQIVMTSL) are cytoplasmic. Residues 1407–1446 (LKKLGEVSWEEEAEISGSSSRYDVALSEQGEFKLLSEDKV) form an interacts with and activates NS3 protease region. Positions 1457–1477 (ALVGAAIHPFALLLVLGGWVL) form an intramembrane region, helical. The Cytoplasmic segment spans residues 1478–2157 (HIKGARRSGD…RNALSMMPEA (680 aa)). The Peptidase S7 domain occupies 1485–1665 (SGDVLWDIPT…EVKEESKEEL (181 aa)). Residues His-1537, Asp-1561, and Ser-1622 each act as charge relay system; for serine protease NS3 activity in the active site. The Helicase ATP-binding domain maps to 1669–1825 (PTMLKKGMTT…HSNGEIEDVQ (157 aa)). The tract at residues 1673–1676 (KKGM) is important for RNA-binding. 1682–1689 (FHPGAGKT) contacts ATP. The DEAH box motif lies at 1773 to 1776 (DEAH). Residues 1820–1997 (EIEDVQTDIP…VRGGMVAPLY (178 aa)) form the Helicase C-terminal domain. Lys-1877 is subject to N6-acetyllysine; by host. The segment at 1942–1961 (AAQRRGRIGRNPNRDGDSYY) is disordered. A helical membrane pass occupies residues 2158 to 2178 (MTIVMLFILAGLLTSGMVIFF). Residues 2179 to 2186 (MSPKGMSR) are Lumenal-facing. The helical intramembrane region spans 2187 to 2207 (MSMAMGTMAGSGYLMFLGGVK). Over 2208 to 2209 (PT) the chain is Lumenal. Residues 2210–2230 (HISYVMLIFFVLMVVIIPEPG) traverse the membrane as a helical segment. Residues 2231 to 2241 (QQRTIQDNQVA) lie on the Cytoplasmic side of the membrane. The chain crosses the membrane as a helical span at residues 2242–2262 (YLIIGILTLLSIVAANELGML). Over 2263-2293 (EKTKEDFFGRRNIATSGGTIPWSWPDLDLKP) the chain is Lumenal. Positions 2294–2314 (GAAWTVYVGIVTMLSPMLHHW) form an intramembrane region, helical. At 2315–2360 (IKVEYGNLSLSGIAQSASVLSFMDKGIPFMKMNISVVILLVSGWNS) the chain is on the lumenal side. The chain crosses the membrane as a helical span at residues 2361–2380 (ITVIPLLCGVGGAMLHWTLI). At 2381 to 2421 (LPGIKAQQSKLAQKRVFHGVAKNPVVDGNPTADIEEAPEMP) the chain is on the cytoplasmic side. The helical transmembrane segment at 2422-2442 (ALYEKKLALYLLLALSLMSVA) threads the bilayer. Over 2443–2445 (MCR) the chain is Lumenal. Residues 2446 to 2466 (TPFSLAEGIVLSSAALGPLIE) traverse the membrane as a helical segment. At 2467-3411 (GNTSLLWNGP…VDADLQPGEL (945 aa)) the chain is on the cytoplasmic side. Positions 2508–2772 (GSASGKTLGE…DVILPIGTRS (265 aa)) constitute an mRNA cap 0-1 NS5-type MT domain. S-adenosyl-L-methionine is bound at residue Ser-2563. Ser-2563 is modified (phosphoserine). The For 2'-O-MTase activity role is filled by Lys-2568. The S-adenosyl-L-methionine site is built by Gly-2593, Trp-2594, Thr-2611, Leu-2612, Asp-2638, and Ile-2639. The active-site For 2'-O-MTase activity is Asp-2653. Residue Ile-2654 participates in S-adenosyl-L-methionine binding. Active-site for 2'-O-MTase activity residues include Lys-2689 and Glu-2725. Residue Tyr-2727 coordinates S-adenosyl-L-methionine. The short motif at 2879 to 2912 (RKIMKVVNRWLFRHLAREKNPRLCTKEEFIAKVR) is the Nuclear localization signal element. Positions 2946, 2950, 2955, and 2958 each coordinate Zn(2+). The region spanning 3036–3188 (GGFYADDTAG…RPVDDRFGLA (153 aa)) is the RdRp catalytic domain. Zn(2+) contacts are provided by His-3223, Cys-3239, and Cys-3358.

It in the N-terminal section; belongs to the class I-like SAM-binding methyltransferase superfamily. mRNA cap 0-1 NS5-type methyltransferase family. In terms of assembly, homodimer. Interacts (via N-terminus) with host EXOC1 (via C-terminus); this interaction results in EXOC1 degradation through the proteasome degradation pathway. Forms heterodimers with envelope protein E in the endoplasmic reticulum and Golgi. As to quaternary structure, homodimer; in the endoplasmic reticulum and Golgi. Interacts with protein prM. Interacts with non-structural protein 1. In terms of assembly, homodimer; Homohexamer when secreted. Interacts with envelope protein E. Interacts (via N-terminus) with serine protease NS3. As to quaternary structure, forms a heterodimer with serine protease NS3. May form homooligomers. In terms of assembly, forms a heterodimer with NS2B. Interacts with non-structural protein 2A (via N-terminus). Interacts with NS4B. Interacts with unphosphorylated RNA-directed RNA polymerase NS5; this interaction stimulates RNA-directed RNA polymerase NS5 guanylyltransferase activity. NS3 interacts with host PDCD6IP; this interaction contributes to virion release. Interacts with serine protease NS3. As to quaternary structure, homodimer. Interacts with host STAT2; this interaction prevents the establishment of cellular antiviral state. Interacts with serine protease NS3. Interacts with host TRIM23; this interaction leads to NS5 ubiquitination. Specific enzymatic cleavages in vivo yield mature proteins. The nascent capsid protein C contains a C-terminal hydrophobic domain that act as a signal sequence for translocation of prM into the lumen of the ER. Mature capsid protein C is cleaved at a site upstream of this hydrophobic domain by NS3. prM is cleaved in post-Golgi vesicles by a host furin, releasing the mature small envelope protein M, and peptide pr. Non-structural protein 2A-alpha, a C-terminally truncated form of non-structural protein 2A, results from partial cleavage by NS3. Specific enzymatic cleavages in vivo yield mature proteins peptide 2K acts as a signal sequence and is removed from the N-terminus of NS4B by the host signal peptidase in the ER lumen. Signal cleavage at the 2K-4B site requires a prior NS3 protease-mediated cleavage at the 4A-2K site. Post-translationally, cleaved in post-Golgi vesicles by a host furin, releasing the mature small envelope protein M, and peptide pr. This cleavage is incomplete as up to 30% of viral particles still carry uncleaved prM. In terms of processing, N-glycosylated. N-glycosylated. The excreted form is glycosylated and this is required for efficient secretion of the protein from infected cells. Post-translationally, polyubiquitinated; ubiquitination is probably mediated by host TRIM23 and is prerequisite for NS5-STAT2 interaction. NS5 is not ISGylated or sumoylated. In terms of processing, acetylated by host KAT5. Acetylation modulates NS3 RNA-binding and unwinding activities and plays an important positive role for viral replication. Phosphorylated on serines residues. This phosphorylation may trigger NS5 nuclear localization.

It is found in the virion. The protein localises to the host nucleus. The protein resides in the host cytoplasm. It localises to the host perinuclear region. Its subcellular location is the secreted. It is found in the virion membrane. The protein localises to the host endoplasmic reticulum membrane. The catalysed reaction is Selective hydrolysis of -Xaa-Xaa-|-Yaa- bonds in which each of the Xaa can be either Arg or Lys and Yaa can be either Ser or Ala.. It carries out the reaction RNA(n) + a ribonucleoside 5'-triphosphate = RNA(n+1) + diphosphate. It catalyses the reaction a ribonucleoside 5'-triphosphate + H2O = a ribonucleoside 5'-diphosphate + phosphate + H(+). The enzyme catalyses ATP + H2O = ADP + phosphate + H(+). The catalysed reaction is a 5'-end (5'-triphosphoguanosine)-ribonucleoside in mRNA + S-adenosyl-L-methionine = a 5'-end (N(7)-methyl 5'-triphosphoguanosine)-ribonucleoside in mRNA + S-adenosyl-L-homocysteine. It carries out the reaction a 5'-end (N(7)-methyl 5'-triphosphoguanosine)-ribonucleoside in mRNA + S-adenosyl-L-methionine = a 5'-end (N(7)-methyl 5'-triphosphoguanosine)-(2'-O-methyl-ribonucleoside) in mRNA + S-adenosyl-L-homocysteine + H(+). Its function is as follows. Plays a role in virus budding by binding to the cell membrane and gathering the viral RNA into a nucleocapsid that forms the core of a mature virus particle. During virus entry, may induce genome penetration into the host cytoplasm after hemifusion induced by the surface proteins. Can migrate to the cell nucleus where it modulates host functions. Functionally, inhibits RNA silencing by interfering with host Dicer. In terms of biological role, prevents premature fusion activity of envelope proteins in trans-Golgi by binding to envelope protein E at pH6.0. After virion release in extracellular space, gets dissociated from E dimers. Acts as a chaperone for envelope protein E during intracellular virion assembly by masking and inactivating envelope protein E fusion peptide. prM is the only viral peptide matured by host furin in the trans-Golgi network probably to avoid catastrophic activation of the viral fusion activity in acidic Golgi compartment prior to virion release. prM-E cleavage is inefficient, and many virions are only partially matured. These uncleaved prM would play a role in immune evasion. Its function is as follows. May play a role in virus budding. Exerts cytotoxic effects by activating a mitochondrial apoptotic pathway through M ectodomain. May display a viroporin activity. Functionally, binds to host cell surface receptor and mediates fusion between viral and cellular membranes. Envelope protein is synthesized in the endoplasmic reticulum in the form of heterodimer with protein prM. They play a role in virion budding in the ER, and the newly formed immature particle is covered with 60 spikes composed of heterodimer between precursor prM and envelope protein E. The virion is transported to the Golgi apparatus where the low pH causes dissociation of PrM-E heterodimers and formation of E homodimers. prM-E cleavage is inefficient, and many virions are only partially matured. These uncleaved prM would play a role in immune evasion. In terms of biological role, involved in immune evasion, pathogenesis and viral replication. Once cleaved off the polyprotein, is targeted to three destinations: the viral replication cycle, the plasma membrane and the extracellular compartment. Essential for viral replication. Required for formation of the replication complex and recruitment of other non-structural proteins to the ER-derived membrane structures. Excreted as a hexameric lipoparticle that plays a role against host immune response. Antagonizing the complement function. Binds to the host macrophages and dendritic cells. Inhibits signal transduction originating from Toll-like receptor 3 (TLR3). Component of the viral RNA replication complex that functions in virion assembly and antagonizes the host immune response. Its function is as follows. Required cofactor for the serine protease function of NS3. May have membrane-destabilizing activity and form viroporins. Functionally, displays three enzymatic activities: serine protease, NTPase and RNA helicase. NS3 serine protease, in association with NS2B, performs its autocleavage and cleaves the polyprotein at dibasic sites in the cytoplasm: C-prM, NS2A-NS2B, NS2B-NS3, NS3-NS4A, NS4A-2K and NS4B-NS5. NS3 RNA helicase binds RNA and unwinds dsRNA in the 3' to 5' direction. Also plays a role in virus assembly. In terms of biological role, regulates the ATPase activity of the NS3 helicase activity. NS4A allows NS3 helicase to conserve energy during unwinding. Functions as a signal peptide for NS4B and is required for the interferon antagonism activity of the latter. Its function is as follows. Induces the formation of ER-derived membrane vesicles where the viral replication takes place. Inhibits interferon (IFN)-induced host STAT1 phosphorylation and nuclear translocation, thereby preventing the establishment of cellular antiviral state by blocking the IFN-alpha/beta pathway. Functionally, replicates the viral (+) and (-) RNA genome, and performs the capping of genomes in the cytoplasm. NS5 methylates viral RNA cap at guanine N-7 and ribose 2'-O positions. Besides its role in RNA genome replication, also prevents the establishment of cellular antiviral state by blocking the interferon-alpha/beta (IFN-alpha/beta) signaling pathway. IFN-I induces binding of NS5 to host IFN-activated transcription factor STAT2, preventing its transcriptional activity. Host TRIM23 is the E3 ligase that interacts with and polyubiquitinates NS5 to promote its binding to STAT2 and trigger IFN-I signaling inhibition. In Yellow fever virus (isolate Ethiopia/Couma/1961) (YFV), this protein is Genome polyprotein.